A 174-amino-acid polypeptide reads, in one-letter code: UBX domain-containing protein 5 (174 aa).

The stretch at 8–58 (QKEKFAEDRALLSQQNKEYAESLAKDIAKKEEKDKIRFEAEQKELRKKTIQ) forms a coiled coil. A UBX domain is found at 74-120 (RLLVRYPNGSRLILSFSPSQPMTSLFDAIILNPACPDYFSVRSVYPR).

As to quaternary structure, forms a complex composed of deubiquitinating enzyme atx-3, adapter ubxn-5 and cdc-48.1. Interacts with atx-3 (via C-terminus). Interacts with cdc-48.1 (via N-terminus) and cdc-48.2. Specifically expressed in the germline.

Probably acts as an adapter for ATPase cdc-48.1 and/or cdc-48.2, conferring substrate specificity. Unlike other UBX domain-containing protein does not bind 'Lys-48'-polyubiquitinated chain. The chain is UBX domain-containing protein 5 from Caenorhabditis elegans.